A 455-amino-acid polypeptide reads, in one-letter code: Notoamide E oxidase notB' (455 aa).

A helical transmembrane segment spans residues 11–31; it reads PAILSPADLTVIIVGLGIAGL. FAD contacts are provided by Glu48 and Gly61. The N-linked (GlcNAc...) asparagine glycan is linked to Asn75. Residue Arg121 coordinates FAD. Active-site residues include Arg199 and Tyr229. FAD-binding residues include Asp324 and Gly337.

The protein belongs to the paxM FAD-dependent monooxygenase family. FAD serves as cofactor.

It is found in the membrane. It carries out the reaction notoamide E + NADPH + O2 + H(+) = notoamide C + NADP(+) + H2O. It catalyses the reaction notoamide E + NADPH + O2 + H(+) = notoamide D + NADP(+) + H2O. It functions in the pathway alkaloid biosynthesis. FAD-dependent monooxygenase; part of the gene cluster that mediates the biosynthesis of notoamide, a fungal indole alkaloid that belongs to a family of natural products containing a characteristic bicyclo[2.2.2]diazaoctane core. The first step of notoamide biosynthesis involves coupling of L-proline and L-tryptophan by the bimodular NRPS notE', to produce cyclo-L-tryptophan-L-proline called brevianamide F. The reverse prenyltransferase notF' then acts as a deoxybrevianamide E synthase and converts brevianamide F to deoxybrevianamide E via reverse prenylation at C-2 of the indole ring leading to the bicyclo[2.2.2]diazaoctane core. Deoxybrevianamide E is further hydroxylated at C-6 of the indole ring, likely catalyzed by the cytochrome P450 monooxygenase notG', to yield 6-hydroxy-deoxybrevianamide E. 6-hydroxy-deoxybrevianamide E is a specific substrate of the prenyltransferase notC' for normal prenylation at C-7 to produce 6-hydroxy-7-prenyl-deoxybrevianamide, also called notoamide S. As the proposed pivotal branching point in notoamide biosynthesis, notoamide S can be diverted to notoamide E through an oxidative pyran ring closure putatively catalyzed by either notH' cytochrome P450 monooxygenase or the notD' FAD-linked oxidoreductase. This step would be followed by an indole 2,3-epoxidation-initiated pinacol-like rearrangement catalyzed by the notB' FAD-dependent monooxygenase leading to the formation of notoamide C and notoamide D. On the other hand notoamide S is converted to notoamide T by notH' (or notD'), a bifunctional oxidase that also functions as the intramolecular Diels-Alderase responsible for generation of (-)-notoamide T. To generate antipodal (+)-notoaminide T, notH (or notD) in Aspergillus strain MF297-2 is expected to catalyze a Diels-Alder reaction leading to the opposite stereochemistry. The remaining oxidoreductase notD' (or notH') likely catalyzes the oxidative pyran ring formation to yield (-)-stephacidin A. The FAD-dependent monooxygenase notI' is highly similar to notB' and is predicted to catalyze a similar conversion from (-)-stephacidin A to (+)-notoamide B via the 2,3-epoxidation of (-)-stephacidin A followed by a pinacol-type rearrangement. Finally, it remains unclear which enzyme could be responsible for the final hydroxylation steps leading to notoamide A and sclerotiamide. This Aspergillus versicolor protein is Notoamide E oxidase notB'.